A 61-amino-acid polypeptide reads, in one-letter code: Small venom protein 1 (61 aa).

The N-terminal stretch at 1–20 (MRCVAIFLVVICAFVLQALA) is a signal peptide.

Expressed by the venom gland.

Its subcellular location is the secreted. In Pimpla hypochondriaca (Parasitoid wasp), this protein is Small venom protein 1.